The primary structure comprises 142 residues: Hemoglobin subunit beta-C (142 aa).

Residues 2–142 (PNKALITGFW…VASALAHRYH (141 aa)) form the Globin domain. Heme b contacts are provided by His-59 and His-88.

Belongs to the globin family. Heterotetramer of two alpha chains and two beta chains. Red blood cells.

Its function is as follows. Involved in oxygen transport from the lung to the various peripheral tissues. The chain is Hemoglobin subunit beta-C (HBBC) from Ovis aries (Sheep).